The chain runs to 326 residues: N-acetyl-gamma-glutamyl-phosphate reductase (326 aa).

C155 is an active-site residue.

This sequence belongs to the NAGSA dehydrogenase family. Type 1 subfamily.

The protein localises to the cytoplasm. The enzyme catalyses N-acetyl-L-glutamate 5-semialdehyde + phosphate + NADP(+) = N-acetyl-L-glutamyl 5-phosphate + NADPH + H(+). Its pathway is amino-acid biosynthesis; L-arginine biosynthesis; N(2)-acetyl-L-ornithine from L-glutamate: step 3/4. Its function is as follows. Catalyzes the NADPH-dependent reduction of N-acetyl-5-glutamyl phosphate to yield N-acetyl-L-glutamate 5-semialdehyde. In Shewanella baltica (strain OS185), this protein is N-acetyl-gamma-glutamyl-phosphate reductase.